A 344-amino-acid chain; its full sequence is DNA-directed RNA polymerase subunit alpha (344 aa).

An alpha N-terminal domain (alpha-NTD) region spans residues 1-238 (MKVIKTAPLI…KQLGVFGERP (238 aa)). The alpha C-terminal domain (alpha-CTD) stretch occupies residues 254–344 (AKDLSAKIES…EKLEDKGGND (91 aa)).

Belongs to the RNA polymerase alpha chain family. As to quaternary structure, homodimer. The RNAP catalytic core consists of 2 alpha, 1 beta, 1 beta' and 1 omega subunit. When a sigma factor is associated with the core the holoenzyme is formed, which can initiate transcription.

The catalysed reaction is RNA(n) + a ribonucleoside 5'-triphosphate = RNA(n+1) + diphosphate. Its function is as follows. DNA-dependent RNA polymerase catalyzes the transcription of DNA into RNA using the four ribonucleoside triphosphates as substrates. The polypeptide is DNA-directed RNA polymerase subunit alpha (Helicobacter pylori (strain J99 / ATCC 700824) (Campylobacter pylori J99)).